Consider the following 1097-residue polypeptide: Error-prone DNA polymerase (1097 aa).

Residues Pro1039 to Arg1097 are disordered. A compositionally biased stretch (basic and acidic residues) spans Asp1055–Asp1066.

The protein belongs to the DNA polymerase type-C family. DnaE2 subfamily.

It localises to the cytoplasm. It catalyses the reaction DNA(n) + a 2'-deoxyribonucleoside 5'-triphosphate = DNA(n+1) + diphosphate. DNA polymerase involved in damage-induced mutagenesis and translesion synthesis (TLS). It is not the major replicative DNA polymerase. This chain is Error-prone DNA polymerase, found in Allorhizobium ampelinum (strain ATCC BAA-846 / DSM 112012 / S4) (Agrobacterium vitis (strain S4)).